The sequence spans 1150 residues: Rho-type GTPase-activating protein 1 (1150 aa).

The span at 1-10 (MSQRDAKKDG) shows a compositional bias: basic and acidic residues. The disordered stretch occupies residues 1–78 (MSQRDAKKDG…AESRKALPNQ (78 aa)). Over residues 40 to 62 (TTKNFPHSRHTSTVAGTEGGSSL) the composition is skewed to polar residues. LIM zinc-binding domains lie at 114–177 (KICA…RRLD), 178–238 (LLCA…LFAA), and 483–546 (DLCY…SSNV). A disordered region spans residues 586 to 683 (SQRKPLSVDP…SHGGSITGKS (98 aa)). Positions 598 to 617 (ENVSSTVETAKQAETTASSD) are enriched in polar residues. Over residues 642–655 (SNETQSSSNSTETS) the composition is skewed to low complexity. Ser690 carries the post-translational modification Phosphoserine. The disordered stretch occupies residues 726–759 (AFRHMPSYTDPSYRKNSGAIYDKNDGTQKGLTPK). One can recognise a Rho-GAP domain in the interval 837 to 1038 (VPLEILVERN…LLIENFEKFC (202 aa)). 2 disordered regions span residues 1078-1097 (LDERNTPKHTASTKRKRQPI) and 1104-1150 (LTSD…IRDS). The segment covering 1088–1097 (ASTKRKRQPI) has biased composition (basic residues). The span at 1104-1134 (LTSDVPSGSEVADTNSLSSTTKDEASPNSDA) shows a compositional bias: polar residues.

The protein resides in the cell tip. It localises to the nucleus. GTPase-activating protein for Rho1. Involved in the F-actin patch localization, cell morphogenesis, regulation of septation, and cell wall synthesis. The sequence is that of Rho-type GTPase-activating protein 1 (rga1) from Schizosaccharomyces pombe (strain 972 / ATCC 24843) (Fission yeast).